The sequence spans 106 residues: Nucleoid-associated protein Exig_0019 (106 aa).

Positions Met-1 to Lys-16 are enriched in low complexity. A disordered region spans residues Met-1–Lys-23.

Belongs to the YbaB/EbfC family. Homodimer.

The protein resides in the cytoplasm. The protein localises to the nucleoid. Its function is as follows. Binds to DNA and alters its conformation. May be involved in regulation of gene expression, nucleoid organization and DNA protection. The chain is Nucleoid-associated protein Exig_0019 from Exiguobacterium sibiricum (strain DSM 17290 / CCUG 55495 / CIP 109462 / JCM 13490 / 255-15).